The primary structure comprises 303 residues: MVTEQEVEAVGQTLVDPGQPLQARFRALFTLRGLGGPVAISWISRAFDDDSALLKHELAYCLGQMQDRRAIPVLLDVLRDTRQEPMVRHEAGEALGAIGDPEVLEILKQYSTDPVVEVAETCQLAVRRLEWLQQHGGESAVRGPYLSVDPAPPAEERDLGQLREALLDEARPLFDRYRAMFALRDAGGKEAALALAEGLRCGSALFRHEIGYVLGQMQHEAAVPQLAAALAQPTENPMVRHECAEALGAIARPACLAALRAHVADPERVVRESCEVALDMYEYETGSTFQYADGLERLRSPLS.

The residue at position 1 (M1) is an N-acetylmethionine. HEAT-like PBS-type repeat units follow at residues 23 to 49 (ARFR…AFDD), 54 to 80 (LKHE…VLRD), 87 to 113 (VRHE…YSTD), 175 to 201 (DRYR…GLRC), 206 to 232 (FRHE…ALAQ), and 239 to 265 (VRHE…HVAD). Residues H56, H89, and E90 each contribute to the Fe cation site. Fe cation is bound by residues H208, H241, and E242.

Belongs to the deoxyhypusine hydroxylase family. Requires Fe(2+) as cofactor.

It catalyses the reaction [eIF5A protein]-deoxyhypusine + AH2 + O2 = [eIF5A protein]-hypusine + A + H2O. The protein operates within protein modification; eIF5A hypusination. Catalyzes the hydroxylation of the N(6)-(4-aminobutyl)-L-lysine intermediate produced by deoxyhypusine synthase/DHPS on a critical lysine of the eukaryotic translation initiation factor 5A/eIF-5A. This is the second step of the post-translational modification of that lysine into an unusual amino acid residue named hypusine. Hypusination is unique to mature eIF-5A factor and is essential for its function. This is Deoxyhypusine hydroxylase from Bos taurus (Bovine).